The primary structure comprises 265 residues: Nitrogenase iron protein 2 (265 aa).

An ATP-binding site is contributed by 8-15 (GKGGIGKS). A [4Fe-4S] cluster-binding site is contributed by Cys91. Position 94 is an ADP-ribosylarginine; by dinitrogenase reductase ADP-ribosyltransferase (Arg94). Cys126 contributes to the [4Fe-4S] cluster binding site.

The protein belongs to the NifH/BchL/ChlL family. Homodimer. It depends on [4Fe-4S] cluster as a cofactor. The reversible ADP-ribosylation of Arg-94 inactivates the nitrogenase reductase and regulates nitrogenase activity.

It catalyses the reaction N2 + 8 reduced [2Fe-2S]-[ferredoxin] + 16 ATP + 16 H2O = H2 + 8 oxidized [2Fe-2S]-[ferredoxin] + 2 NH4(+) + 16 ADP + 16 phosphate + 6 H(+). In terms of biological role, the key enzymatic reactions in nitrogen fixation are catalyzed by the nitrogenase complex, which has 2 components: the iron protein and the molybdenum-iron protein. This Methanothermobacter thermautotrophicus (strain ATCC 29096 / DSM 1053 / JCM 10044 / NBRC 100330 / Delta H) (Methanobacterium thermoautotrophicum) protein is Nitrogenase iron protein 2 (nifH2).